We begin with the raw amino-acid sequence, 104 residues long: Flagellar hook-basal body complex protein FliE (104 aa).

This sequence belongs to the FliE family.

It is found in the bacterial flagellum basal body. The chain is Flagellar hook-basal body complex protein FliE from Salmonella typhi.